We begin with the raw amino-acid sequence, 229 residues long: NAD-dependent protein deacetylase (229 aa).

The Deacetylase sirtuin-type domain occupies 1-229; that stretch reads MNNLKEAIKQ…NDAVKVFAEI (229 aa). NAD(+) contacts are provided by Ala-20, Arg-32, Gln-96, Ile-98, Asp-99, His-114, Thr-181, Ser-182, Asn-205, and Val-223. Nicotinamide-binding residues include Ile-98 and Asp-99. The active-site Proton acceptor is the His-114.

Belongs to the sirtuin family. Class U subfamily.

Its subcellular location is the cytoplasm. It carries out the reaction N(6)-acetyl-L-lysyl-[protein] + NAD(+) + H2O = 2''-O-acetyl-ADP-D-ribose + nicotinamide + L-lysyl-[protein]. Functionally, NAD-dependent protein deacetylase which modulates the activities of several enzymes which are inactive in their acetylated form. The chain is NAD-dependent protein deacetylase from Listeria innocua serovar 6a (strain ATCC BAA-680 / CLIP 11262).